The sequence spans 90 residues: Delta-aiptatoxin-Adi1a (90 aa).

A signal peptide spans 1-21; that stretch reads MKTAMLIAVLGFCAALCFVES. The propeptide occupies 22-44; that stretch reads SHEEEREAAVYLTDLVSKAESAI. 3 cysteine pairs are disulfide-bonded: cysteine 50/cysteine 86, cysteine 52/cysteine 77, and cysteine 70/cysteine 87.

This sequence belongs to the sea anemone sodium channel inhibitory toxin family.

The protein localises to the secreted. The protein resides in the nematocyst. In terms of biological role, cardioactive peptide that acts on voltage-gated sodium channels (hNav1.5/SCN5A) and voltage-gated potassium channels (Kv). The activity on sodium channels consists of inhibition on sodium current inactivation with no significant effect on current activation. This effect may be caused by direct interaction of the toxin with sodium channel site-3. The activity on potassium channels consists of a significant increase of the amplitude of the transient component of the potassium current, shifting the current threshold to more negative membrane potentials. These effects are concentration-dependent and reversible and may be due to a direct interaction between the toxin and the voltage-sensing domain of the channel. Physiologically, this toxin increases the amplitude of cardiomyocyte contraction and slows the late phase of the twitch relaxation velocity with no induction of spontaneous twitching. It increases action potential duration of cardiomyocytes with no effect on its threshold and on the cell resting potential. On insects, it shows neurotoxic activity to the blowfly larvae S.falculaty, causing an immediate spasm that progressed to body contraction and paralysis. This is Delta-aiptatoxin-Adi1a from Exaiptasia diaphana (Tropical sea anemone).